The primary structure comprises 537 residues: tRNA(His) guanylyltransferase 2 (537 aa).

Positions 307, 308, and 354 each coordinate Mg(2+). GTP-binding positions include 307-312 (DGCHFH) and 353-354 (SD).

Belongs to the tRNA(His) guanylyltransferase family. The cofactor is Mg(2+).

It localises to the nucleus. The protein resides in the nucleoplasm. It catalyses the reaction a 5'-end ribonucleotide-tRNA(His) + GTP + ATP + H2O = a 5'-end phospho-guanosine-ribonucleotide-tRNA(His) + AMP + 2 diphosphate + H(+). Adds a GMP to the 5'-end of tRNA(His) after transcription and RNase P cleavage. The protein is tRNA(His) guanylyltransferase 2 (THG2) of Arabidopsis thaliana (Mouse-ear cress).